The primary structure comprises 581 residues: Putative aluminum-activated malate transporter 3 (581 aa).

The next 6 membrane-spanning stretches (helical) occupy residues 98–118, 122–142, 148–164, 167–187, 201–218, and 231–251; these read MGLA…GLEL, YLWA…ATFS, GLGT…MSWI, MTGN…AFFA, YGFR…VSGY, and FLLI…IYPI.

Belongs to the aromatic acid exporter (TC 2.A.85) family.

It localises to the membrane. Malate transporter. The protein is Putative aluminum-activated malate transporter 3 (ALMT3) of Arabidopsis thaliana (Mouse-ear cress).